The chain runs to 524 residues: Probable malate:quinone oxidoreductase (524 aa).

Belongs to the MQO family. FAD is required as a cofactor.

The catalysed reaction is (S)-malate + a quinone = a quinol + oxaloacetate. Its pathway is carbohydrate metabolism; tricarboxylic acid cycle; oxaloacetate from (S)-malate (quinone route): step 1/1. In Blochmanniella floridana, this protein is Probable malate:quinone oxidoreductase.